Consider the following 257-residue polypeptide: Zinc transporter ZupT (257 aa).

3 helical membrane passes run 5–25 (LILTLLAGAATFIGAFLGVLG), 32–52 (VLAFSLGFAAGIMLLISLMEM), and 61–81 (GMSPVLGYGMFIIGLLGYFGL). Asn120 and Glu123 together coordinate Fe(2+). The Zn(2+) site is built by Glu123 and His148. 3 residues coordinate Fe(2+): Asn149, Glu152, and Glu181. Glu152 contributes to the Zn(2+) binding site. Helical transmembrane passes span 182–202 (IFGGVLAWLILGSLVSPIVMA), 203–223 (AIMAAVAGIMVALSVDELMPL), and 236–256 (GVLCGMSVMGLSLVILQTIGI).

The protein belongs to the ZIP transporter (TC 2.A.5) family. ZupT subfamily.

The protein localises to the cell inner membrane. The enzyme catalyses Zn(2+)(in) = Zn(2+)(out). Its function is as follows. Mediates zinc uptake. May also transport other divalent cations. In Salmonella arizonae (strain ATCC BAA-731 / CDC346-86 / RSK2980), this protein is Zinc transporter ZupT.